Consider the following 308-residue polypeptide: Malate dehydrogenase (308 aa).

NAD(+)-binding positions include 6 to 11 (GSGRVG) and D31. 2 residues coordinate substrate: R80 and R86. NAD(+) contacts are provided by residues N93 and 116–118 (TTN). Substrate-binding residues include N118 and R149. H173 serves as the catalytic Proton acceptor.

This sequence belongs to the LDH/MDH superfamily.

The enzyme catalyses (S)-malate + NAD(+) = oxaloacetate + NADH + H(+). Its function is as follows. Catalyzes the reversible oxidation of malate to oxaloacetate. The sequence is that of Malate dehydrogenase (mdh) from Thermoproteus tenax (strain ATCC 35583 / DSM 2078 / JCM 9277 / NBRC 100435 / Kra 1).